Reading from the N-terminus, the 335-residue chain is Methionine import ATP-binding protein MetN 2 (335 aa).

The ABC transporter domain occupies 2–242 (IEFQNVHKTY…PEHPTTKRFV (241 aa)). 38 to 45 (GHSGAGKS) contributes to the ATP binding site.

Belongs to the ABC transporter superfamily. Methionine importer (TC 3.A.1.24) family. In terms of assembly, the complex is composed of two ATP-binding proteins (MetN), two transmembrane proteins (MetI) and a solute-binding protein (MetQ).

It localises to the cell inner membrane. The catalysed reaction is L-methionine(out) + ATP + H2O = L-methionine(in) + ADP + phosphate + H(+). It catalyses the reaction D-methionine(out) + ATP + H2O = D-methionine(in) + ADP + phosphate + H(+). Functionally, part of the ABC transporter complex MetNIQ involved in methionine import. Responsible for energy coupling to the transport system. This chain is Methionine import ATP-binding protein MetN 2, found in Pseudomonas entomophila (strain L48).